The sequence spans 157 residues: Cyclic pyranopterin monophosphate synthase (157 aa).

Substrate contacts are provided by residues Met-74 to His-76 and Met-112 to Glu-113. The active site involves Asp-127.

The protein belongs to the MoaC family. Homohexamer; trimer of dimers.

It carries out the reaction (8S)-3',8-cyclo-7,8-dihydroguanosine 5'-triphosphate = cyclic pyranopterin phosphate + diphosphate. It functions in the pathway cofactor biosynthesis; molybdopterin biosynthesis. In terms of biological role, catalyzes the conversion of (8S)-3',8-cyclo-7,8-dihydroguanosine 5'-triphosphate to cyclic pyranopterin monophosphate (cPMP). This Campylobacter jejuni (strain RM1221) protein is Cyclic pyranopterin monophosphate synthase.